The following is a 91-amino-acid chain: Bacterial microcompartment shell vertex protein PduN (91 aa).

The BMV domain occupies 1 to 87 (MHLARVTGAV…IDLAVVGIVD (87 aa)).

This sequence belongs to the CcmL/EutN family. Homopentamer. Interacts with shell protein PduA.

Its subcellular location is the bacterial microcompartment. It participates in polyol metabolism; 1,2-propanediol degradation. In terms of biological role, probably forms vertices in the shell of the bacterial microcompartment (BMC) dedicated to 1,2-propanediol (1,2-PD) degradation. Required for structural integrity of BMCs and to mitigate propionaldehyde toxicity. Its function is as follows. The 1,2-PD-specific bacterial microcompartment (BMC) concentrates low levels of 1,2-PD catabolic enzymes, concentrates volatile reaction intermediates thus enhancing pathway flux and keeps the level of toxic, mutagenic propionaldehyde low. The chain is Bacterial microcompartment shell vertex protein PduN from Salmonella typhimurium (strain LT2 / SGSC1412 / ATCC 700720).